The chain runs to 364 residues: Alanine racemase (364 aa).

Lysine 35 (proton acceptor; specific for D-alanine) is an active-site residue. Residue lysine 35 is modified to N6-(pyridoxal phosphate)lysine. Arginine 136 is a substrate binding site. The active-site Proton acceptor; specific for L-alanine is the tyrosine 261. Methionine 309 serves as a coordination point for substrate.

The protein belongs to the alanine racemase family. The cofactor is pyridoxal 5'-phosphate.

It catalyses the reaction L-alanine = D-alanine. Its pathway is amino-acid biosynthesis; D-alanine biosynthesis; D-alanine from L-alanine: step 1/1. In terms of biological role, catalyzes the interconversion of L-alanine and D-alanine. May also act on other amino acids. This chain is Alanine racemase (alr), found in Shewanella amazonensis (strain ATCC BAA-1098 / SB2B).